The sequence spans 274 residues: Ribosome biogenesis protein UTP30 (274 aa).

Belongs to the universal ribosomal protein uL1 family. Highly divergent. In terms of assembly, component of the 90S pre-ribosomes. Interacts with FAF1.

The protein resides in the nucleus. It localises to the nucleolus. In terms of biological role, involved in rRNA-processing and ribosome biosynthesis. The protein is Ribosome biogenesis protein UTP30 (UTP30) of Saccharomyces cerevisiae (strain ATCC 204508 / S288c) (Baker's yeast).